The primary structure comprises 370 residues: MNNTPRRLLIAGGGTGGHLFPALAVAERWRERYGLHSVHFIGGQRGLENRLVPNAGFTLETLAVGQLKGKGLPHKLRTLGGLLPAVWQARGMVQRFDPHVVLGVGGYASAPAMVAARSLGIPMALHEQNARAGLTNRLLSHLAQQVLVSFNGVCAQFPGRACQLTGNPVRQALAAVPPLQIPTLFTPQRPLRILVFGGSQGASIFTQRVPEALLPLAQHGAPIQVTQQVQEADADALQRRYQEGGIEAITTPFIEDMATAYAQADLVICRSGATSVAELAATGRPSIMVPYPYAADDHQAANAQALVSIQGGWMRRQEQFHSAWLEAFITSLCMQPAQLQRAGEIARSYARPNADMQIVTLLASMVKMKR.

Residues 15–17 (TGG), Asn129, Arg170, Ser199, Ile254, and Gln299 each bind UDP-N-acetyl-alpha-D-glucosamine.

It belongs to the glycosyltransferase 28 family. MurG subfamily.

It is found in the cell inner membrane. It catalyses the reaction di-trans,octa-cis-undecaprenyl diphospho-N-acetyl-alpha-D-muramoyl-L-alanyl-D-glutamyl-meso-2,6-diaminopimeloyl-D-alanyl-D-alanine + UDP-N-acetyl-alpha-D-glucosamine = di-trans,octa-cis-undecaprenyl diphospho-[N-acetyl-alpha-D-glucosaminyl-(1-&gt;4)]-N-acetyl-alpha-D-muramoyl-L-alanyl-D-glutamyl-meso-2,6-diaminopimeloyl-D-alanyl-D-alanine + UDP + H(+). Its pathway is cell wall biogenesis; peptidoglycan biosynthesis. Cell wall formation. Catalyzes the transfer of a GlcNAc subunit on undecaprenyl-pyrophosphoryl-MurNAc-pentapeptide (lipid intermediate I) to form undecaprenyl-pyrophosphoryl-MurNAc-(pentapeptide)GlcNAc (lipid intermediate II). The chain is UDP-N-acetylglucosamine--N-acetylmuramyl-(pentapeptide) pyrophosphoryl-undecaprenol N-acetylglucosamine transferase from Magnetococcus marinus (strain ATCC BAA-1437 / JCM 17883 / MC-1).